Reading from the N-terminus, the 1164-residue chain is Shugoshin 2A (1164 aa).

Positions 62-113 (LSKEKENSRRITTEKMQLQKEVEKLNFENTFLRLKLNTLNKKLVEIESHVSN) form a coiled coil. 5 disordered regions span residues 160-269 (SEND…VTMR), 287-314 (HQPTSSPGSNWNNEIHGHTNETSNNTQR), 390-492 (RKVK…PFSR), 521-541 (TFVIRKSEKDNLFPNQEDKDT), and 917-992 (PLDS…ETHG). The segment covering 182 to 198 (SKTSPDSTSSVSRQPSS) has biased composition (low complexity). 2 stretches are compositionally biased toward polar residues: residues 238–247 (DQSPKSSLSE) and 288–299 (QPTSSPGSNWNN). Positions 390 to 412 (RKVKGASSDKKRESSKRECKDGS) are enriched in basic and acidic residues. A compositionally biased stretch (polar residues) spans 443 to 472 (CISSTEQPSQVNTQKKRTLQNSSDQENIQN). A compositionally biased stretch (basic and acidic residues) spans 525 to 541 (RKSEKDNLFPNQEDKDT). A compositionally biased stretch (polar residues) spans 934-948 (GEQTNLPKMQKQSAG). A Phosphoserine modification is found at Ser-1042. The tract at residues 1092-1164 (ITTGTRNPHH…EPSLRSKMRR (73 aa)) is disordered. Low complexity predominate over residues 1112–1125 (TSLVLVDTSSVSDT). The span at 1126 to 1140 (NPANPENESEGQSSH) shows a compositional bias: polar residues.

The protein belongs to the shugoshin family. Part of an astrin (SPAG5)-kinastrin (SKAP) complex containing KNSTRN, SPAG5, PLK1, DYNLL1 and SGO2A. Interacts with CDCA8. Interacts with PPP2CA. Ubiquitously expressed in proliferating cells. Highly expressed in the testis and oocytes.

The protein resides in the nucleus. It is found in the chromosome. The protein localises to the centromere. It localises to the kinetochore. Functionally, cooperates with PPP2CA to protect centromeric cohesin from separase-mediated cleavage in oocytes specifically during meiosis I. Has a crucial role in protecting REC8 at centromeres from cleavage by separase. During meiosis, protects centromeric cohesion complexes until metaphase II/anaphase II transition, preventing premature release of meiosis-specific REC8 cohesin complexes from anaphase I centromeres. Is thus essential for an accurate gametogenesis. May act by targeting PPP2CA to centromeres, thus leading to cohesin dephosphorylation. Essential for recruiting KIF2C to the inner centromere and for correcting defective kinetochore attachments. Involved in centromeric enrichment of AUKRB in prometaphase. The chain is Shugoshin 2A from Mus musculus (Mouse).